Consider the following 374-residue polypeptide: Queuine tRNA-ribosyltransferase (374 aa).

Asp89 acts as the Proton acceptor in catalysis. Substrate contacts are provided by residues Asp89–Phe93, Asp143, Gln187, and Gly214. Positions Gly245 to Asp251 are RNA binding. Asp264 functions as the Nucleophile in the catalytic mechanism. Residues Thr269–Arg273 are RNA binding; important for wobble base 34 recognition. 4 residues coordinate Zn(2+): Cys302, Cys304, Cys307, and His333.

It belongs to the queuine tRNA-ribosyltransferase family. Homodimer. Within each dimer, one monomer is responsible for RNA recognition and catalysis, while the other monomer binds to the replacement base PreQ1. Zn(2+) serves as cofactor.

It catalyses the reaction 7-aminomethyl-7-carbaguanine + guanosine(34) in tRNA = 7-aminomethyl-7-carbaguanosine(34) in tRNA + guanine. The protein operates within tRNA modification; tRNA-queuosine biosynthesis. In terms of biological role, catalyzes the base-exchange of a guanine (G) residue with the queuine precursor 7-aminomethyl-7-deazaguanine (PreQ1) at position 34 (anticodon wobble position) in tRNAs with GU(N) anticodons (tRNA-Asp, -Asn, -His and -Tyr). Catalysis occurs through a double-displacement mechanism. The nucleophile active site attacks the C1' of nucleotide 34 to detach the guanine base from the RNA, forming a covalent enzyme-RNA intermediate. The proton acceptor active site deprotonates the incoming PreQ1, allowing a nucleophilic attack on the C1' of the ribose to form the product. After dissociation, two additional enzymatic reactions on the tRNA convert PreQ1 to queuine (Q), resulting in the hypermodified nucleoside queuosine (7-(((4,5-cis-dihydroxy-2-cyclopenten-1-yl)amino)methyl)-7-deazaguanosine). The chain is Queuine tRNA-ribosyltransferase from Shewanella sp. (strain MR-4).